Consider the following 160-residue polypeptide: Putative 4-hydroxy-4-methyl-2-oxoglutarate aldolase (160 aa).

Substrate contacts are provided by residues 78–81 (GDVI) and Arg-100. Asp-101 lines the a divalent metal cation pocket.

The protein belongs to the class II aldolase/RraA-like family. Homotrimer. It depends on a divalent metal cation as a cofactor.

The catalysed reaction is 4-hydroxy-4-methyl-2-oxoglutarate = 2 pyruvate. The enzyme catalyses oxaloacetate + H(+) = pyruvate + CO2. Functionally, catalyzes the aldol cleavage of 4-hydroxy-4-methyl-2-oxoglutarate (HMG) into 2 molecules of pyruvate. Also contains a secondary oxaloacetate (OAA) decarboxylase activity due to the common pyruvate enolate transition state formed following C-C bond cleavage in the retro-aldol and decarboxylation reactions. The chain is Putative 4-hydroxy-4-methyl-2-oxoglutarate aldolase from Mycolicibacterium paratuberculosis (strain ATCC BAA-968 / K-10) (Mycobacterium paratuberculosis).